The following is a 203-amino-acid chain: Small ribosomal subunit protein uS4c (203 aa).

One can recognise an S4 RNA-binding domain in the interval Met89–Leu152.

This sequence belongs to the universal ribosomal protein uS4 family. In terms of assembly, part of the 30S ribosomal subunit. Contacts protein S5. The interaction surface between S4 and S5 is involved in control of translational fidelity.

The protein localises to the plastid. In terms of biological role, one of the primary rRNA binding proteins, it binds directly to 16S rRNA where it nucleates assembly of the body of the 30S subunit. Functionally, with S5 and S12 plays an important role in translational accuracy. The protein is Small ribosomal subunit protein uS4c (rps4) of Orobanche minor (Small broomrape).